The following is a 182-amino-acid chain: Aralkylamine dehydrogenase light chain (182 aa).

A signal peptide (tat-type signal) is located at residues 1-47; it reads MRWLDKFGESLSRSVAHKTSRRSVLRSVGKLMVGSAFVLPVLPVARA. Disulfide bonds link cysteine 75–cysteine 140, cysteine 81–cysteine 113, cysteine 88–cysteine 171, cysteine 90–cysteine 138, cysteine 91–cysteine 135, cysteine 98–cysteine 129, and cysteine 130–cysteine 161. Aspartate 84 provides a ligand contact to substrate. Tryptophan 109 acts as the Tryptophylquinone 6'-substrate hemiaminal intermediate in catalysis. Residue tryptophan 109 is modified to Tryptophylquinone. The segment at residues 109–160 is a cross-link (tryptophan tryptophylquinone (Trp-Trp)); that stretch reads WIGTCHNPHDGKDYLISYHDCCGKTACGRCQCNTQTRERPGYEFFLHNDVNW. Aspartate 128 functions as the Proton acceptor in the catalytic mechanism. A substrate-binding site is contributed by 156-158; the sequence is NDV.

The protein belongs to the aromatic amine dehydrogenase light chain family. As to quaternary structure, heterotetramer of two light and two heavy chains. Binds two azurin molecules per heterotetramer. The cofactor is tryptophan tryptophylquinone residue. Post-translationally, tryptophan tryptophylquinone (TTQ) is formed by oxidation of the indole ring of a tryptophan to form tryptophylquinone followed by covalent cross-linking with another tryptophan residue. In terms of processing, predicted to be exported by the Tat system. The position of the signal peptide cleavage has been experimentally proven.

The protein localises to the periplasm. It catalyses the reaction an aralkylamine + 2 oxidized [azurin] + H2O = an aromatic aldehyde + 2 reduced [azurin] + NH4(+) + 2 H(+). Irreversibly inhibited by phenylhydrazine, hydroxylamine, semicarbazide, hydrazine and aminoguanidine. Reversibly inhibited by isonicotinic acid hydrazide (isoniazid) and isonicotinic acid 2-isopropyl hydrazide (iproniazid). In terms of biological role, oxidizes primary aromatic amines and, more slowly, some long-chain aliphatic amines, but not methylamine or ethylamine. Uses azurin as an electron acceptor to transfer electrons from the reduced tryptophylquinone cofactor. The chain is Aralkylamine dehydrogenase light chain from Alcaligenes faecalis.